We begin with the raw amino-acid sequence, 262 residues long: Co-chaperone protein DjlA (262 aa).

The Periplasmic portion of the chain corresponds to 1–6 (MRFWGK). The helical transmembrane segment at 7 to 30 (FFGFVIGFMFGRFFGALLGLWLGH) threads the bilayer. Over 31-262 (LYDKRPGGGA…DRVKSERGMR (232 aa)) the chain is Cytoplasmic. Positions 196 to 262 (DAYHLLGITA…DRVKSERGMR (67 aa)) constitute a J domain.

As to quaternary structure, homodimer.

The protein resides in the cell inner membrane. Its function is as follows. Regulatory DnaK co-chaperone. Direct interaction between DnaK and DjlA is needed for the induction of the wcaABCDE operon, involved in the synthesis of a colanic acid polysaccharide capsule, possibly through activation of the RcsB/RcsC phosphotransfer signaling pathway. The colanic acid capsule may help the bacterium survive conditions outside the host. In Shewanella oneidensis (strain ATCC 700550 / JCM 31522 / CIP 106686 / LMG 19005 / NCIMB 14063 / MR-1), this protein is Co-chaperone protein DjlA.